An 83-amino-acid chain; its full sequence is Mu-theraphotoxin-Hhn2m (83 aa).

The N-terminal stretch at 1–21 (MKASMFLALAGLVLLFVVGYA) is a signal peptide. Positions 22–48 (SESEEKEFPIELLSKIFAVDVFKGEER) are excised as a propeptide. 3 disulfide bridges follow: Cys-50-Cys-65, Cys-57-Cys-70, and Cys-64-Cys-77. Leu-81 is subject to Leucine amide.

This sequence belongs to the neurotoxin 10 (Hwtx-1) family. 15 (Hntx-3) subfamily. Monomer. In terms of tissue distribution, expressed by the venom gland.

The protein localises to the secreted. Lethal neurotoxin. Selectively blocks tetrodotoxin-sensitive voltage-gated sodium channels (Nav). Does not affect tetrodotoxin-resistant voltage-gated sodium channels or calcium channels. The sequence is that of Mu-theraphotoxin-Hhn2m from Cyriopagopus hainanus (Chinese bird spider).